The chain runs to 315 residues: Transaldolase (315 aa).

Catalysis depends on lysine 131, which acts as the Schiff-base intermediate with substrate.

It belongs to the transaldolase family. Type 1 subfamily. Homodimer.

It localises to the cytoplasm. The enzyme catalyses D-sedoheptulose 7-phosphate + D-glyceraldehyde 3-phosphate = D-erythrose 4-phosphate + beta-D-fructose 6-phosphate. Its pathway is carbohydrate degradation; pentose phosphate pathway; D-glyceraldehyde 3-phosphate and beta-D-fructose 6-phosphate from D-ribose 5-phosphate and D-xylulose 5-phosphate (non-oxidative stage): step 2/3. Its function is as follows. Transaldolase is important for the balance of metabolites in the pentose-phosphate pathway. This is Transaldolase from Haemophilus ducreyi (strain 35000HP / ATCC 700724).